Here is a 414-residue protein sequence, read N- to C-terminus: Snake venom metalloproteinase atrolysin-B (414 aa).

The signal sequence occupies residues 1–20 (MIEVLLVTICLAVFPYQGSS). A propeptide spanning residues 21–190 (IILESGNVND…KASDLNLNPD (170 aa)) is cleaved from the precursor. Gln191 is subject to Pyrrolidone carboxylic acid. A Peptidase M12B domain is found at 197 to 393 (RYIELVVVAD…YKPQCILNKP (197 aa)). Ca(2+)-binding residues include Glu200 and Asp284. 2 cysteine pairs are disulfide-bonded: Cys308-Cys388 and Cys348-Cys355. Residue His333 coordinates Zn(2+). Residue Glu334 is part of the active site. The Zn(2+) site is built by His337 and His343. Cys388, Asn391, Val403, Asn406, Leu408, Glu410, and Glu413 together coordinate Ca(2+). Positions 394–414 (LRIDPVSTPVSGNELLEAGEE) are excised as a propeptide.

This sequence belongs to the venom metalloproteinase (M12B) family. P-I subfamily. In terms of assembly, monomer. Zn(2+) serves as cofactor. The N-terminus is blocked. As to expression, expressed by the venom gland.

The protein resides in the secreted. It carries out the reaction Cleavage of 5-His-|-Leu-6, 10-His-|-Leu-11, 14-Ala-|-Leu-15, 16-Tyr-|-Leu-17 and 23-Gly-|-Phe-24 of insulin B chain. Identical to the cleavage of insulin B chain by atrolysin C. Also cleaves Xaa-|-Ser bonds in glucagon.. Snake venom metalloproteinase that impairs hemostasis in the envenomed animal. The polypeptide is Snake venom metalloproteinase atrolysin-B (Crotalus atrox (Western diamondback rattlesnake)).